The primary structure comprises 285 residues: Hypersensitive-induced response protein 3 (285 aa).

Gly-2 carries N-myristoyl glycine lipidation. Coiled-coil stretches lie at residues 113–139 (NLDDVFEQKNEIAKSVEEELDKAMTAY) and 165–185 (NAAARMRVAASEKAEAEKIIQ).

As to quaternary structure, self-interacts and forms heteromers. Interacts with NB-LRR class of R proteins before R proteins (e.g. RPS2 or RPM1) are activated by the effectors.

It localises to the cell membrane. This chain is Hypersensitive-induced response protein 3 (HIR3), found in Arabidopsis thaliana (Mouse-ear cress).